The sequence spans 493 residues: Transmembrane protein 184 homolog DDB_G0284525 (493 aa).

Positions 1–10 (MTQESSSSNH) are enriched in polar residues. The tract at residues 1-25 (MTQESSSSNHYVDESSFDNNNNNNN) is disordered. A run of 7 helical transmembrane segments spans residues 46-66 (VPAL…ATIL), 87-107 (IVRI…SLLL), 119-139 (DCYE…YGGG), 180-200 (YVLV…FGLY), 212-232 (FYNA…VVLF), 254-274 (IVVF…NFGW), and 293-313 (FLIC…FPYE). N-linked (GlcNAc...) asparagine glycosylation is found at Asn415 and Asn416.

This sequence belongs to the TMEM184 family.

It localises to the cell membrane. Probable transporter. This Dictyostelium discoideum (Social amoeba) protein is Transmembrane protein 184 homolog DDB_G0284525 (tmem184A).